Consider the following 164-residue polypeptide: MTEFTHINQQGHAKMVDVSDKQITKRTAVAHSSITVNETIFKQISNNTNTKGNVLNTAQIAGIMAAKNTSTLIPMCHPLPLTGIDVHFSWDETNAPLYTLNIQTTVSTTGKTGVEMEALTAASATALTIYDMTKAVDKGMIIGETYLESKSGGKSGDFQRQSNQ.

Substrate contacts are provided by residues 75 to 77 and 116 to 117; these read MCH and ME. Aspartate 131 is an active-site residue.

This sequence belongs to the MoaC family. In terms of assembly, homohexamer; trimer of dimers.

It carries out the reaction (8S)-3',8-cyclo-7,8-dihydroguanosine 5'-triphosphate = cyclic pyranopterin phosphate + diphosphate. The protein operates within cofactor biosynthesis; molybdopterin biosynthesis. Functionally, catalyzes the conversion of (8S)-3',8-cyclo-7,8-dihydroguanosine 5'-triphosphate to cyclic pyranopterin monophosphate (cPMP). The polypeptide is Cyclic pyranopterin monophosphate synthase (Staphylococcus aureus (strain USA300)).